Consider the following 132-residue polypeptide: Small ribosomal subunit protein uS8 (132 aa).

The protein belongs to the universal ribosomal protein uS8 family. In terms of assembly, part of the 30S ribosomal subunit. Contacts proteins S5 and S12.

One of the primary rRNA binding proteins, it binds directly to 16S rRNA central domain where it helps coordinate assembly of the platform of the 30S subunit. The sequence is that of Small ribosomal subunit protein uS8 from Psychrobacter arcticus (strain DSM 17307 / VKM B-2377 / 273-4).